Reading from the N-terminus, the 474-residue chain is 3-isopropylmalate dehydratase large subunit (474 aa).

[4Fe-4S] cluster contacts are provided by Cys350, Cys415, and Cys418.

It belongs to the aconitase/IPM isomerase family. LeuC type 1 subfamily. As to quaternary structure, heterodimer of LeuC and LeuD. [4Fe-4S] cluster serves as cofactor.

The catalysed reaction is (2R,3S)-3-isopropylmalate = (2S)-2-isopropylmalate. It participates in amino-acid biosynthesis; L-leucine biosynthesis; L-leucine from 3-methyl-2-oxobutanoate: step 2/4. Catalyzes the isomerization between 2-isopropylmalate and 3-isopropylmalate, via the formation of 2-isopropylmaleate. This chain is 3-isopropylmalate dehydratase large subunit, found in Phenylobacterium zucineum (strain HLK1).